The following is a 654-amino-acid chain: Probable Xaa-Pro aminopeptidase P (654 aa).

The Mn(2+) site is built by Asp-451, Asp-462, Glu-560, and Glu-574.

This sequence belongs to the peptidase M24B family. The cofactor is Mn(2+).

The enzyme catalyses Release of any N-terminal amino acid, including proline, that is linked to proline, even from a dipeptide or tripeptide.. Functionally, catalyzes the removal of a penultimate prolyl residue from the N-termini of peptides. The protein is Probable Xaa-Pro aminopeptidase P (ampp) of Botryotinia fuckeliana (strain B05.10) (Noble rot fungus).